Here is a 234-residue protein sequence, read N- to C-terminus: Endonuclease V (234 aa).

Mg(2+) is bound by residues aspartate 46 and aspartate 116.

Belongs to the endonuclease V family. The cofactor is Mg(2+).

Its subcellular location is the cytoplasm. It carries out the reaction Endonucleolytic cleavage at apurinic or apyrimidinic sites to products with a 5'-phosphate.. Functionally, DNA repair enzyme involved in the repair of deaminated bases. Selectively cleaves double-stranded DNA at the second phosphodiester bond 3' to a deoxyinosine leaving behind the intact lesion on the nicked DNA. This chain is Endonuclease V, found in Clostridium acetobutylicum (strain ATCC 824 / DSM 792 / JCM 1419 / IAM 19013 / LMG 5710 / NBRC 13948 / NRRL B-527 / VKM B-1787 / 2291 / W).